Here is a 365-residue protein sequence, read N- to C-terminus: Phospho-N-acetylmuramoyl-pentapeptide-transferase (365 aa).

The next 10 membrane-spanning stretches (helical) occupy residues 15–35 (PSGTQLLGLLSVLLVGLAVLI), 51–71 (VPVLVSAIVAGIFGMWIVPLL), 96–116 (TMGGLIFLPVGLAAGVIFAGF), 121–141 (IAVALVTLAYGVIGWVDDWQV), 156–176 (LILQIAIAVVFCIWLALTAPE), 180–200 (ITFFAGLSLPLGVFFWALAGF), 217–237 (GLAGGTGAIAFLGVGALALPA), 238–258 (HPGLSLLCACLSGACLGFIYH), 279–299 (LAAAGILSGNIWGLLIISGIF), and 344–364 (TQIVGAFYLINLGLVLLSFIL).

This sequence belongs to the glycosyltransferase 4 family. MraY subfamily. Mg(2+) serves as cofactor.

The protein resides in the cell inner membrane. It carries out the reaction UDP-N-acetyl-alpha-D-muramoyl-L-alanyl-gamma-D-glutamyl-meso-2,6-diaminopimeloyl-D-alanyl-D-alanine + di-trans,octa-cis-undecaprenyl phosphate = di-trans,octa-cis-undecaprenyl diphospho-N-acetyl-alpha-D-muramoyl-L-alanyl-D-glutamyl-meso-2,6-diaminopimeloyl-D-alanyl-D-alanine + UMP. It participates in cell wall biogenesis; peptidoglycan biosynthesis. Functionally, catalyzes the initial step of the lipid cycle reactions in the biosynthesis of the cell wall peptidoglycan: transfers peptidoglycan precursor phospho-MurNAc-pentapeptide from UDP-MurNAc-pentapeptide onto the lipid carrier undecaprenyl phosphate, yielding undecaprenyl-pyrophosphoryl-MurNAc-pentapeptide, known as lipid I. This is Phospho-N-acetylmuramoyl-pentapeptide-transferase from Picosynechococcus sp. (strain ATCC 27264 / PCC 7002 / PR-6) (Agmenellum quadruplicatum).